The following is a 93-amino-acid chain: Small ribosomal subunit protein uS19 (93 aa).

This sequence belongs to the universal ribosomal protein uS19 family.

Its function is as follows. Protein S19 forms a complex with S13 that binds strongly to the 16S ribosomal RNA. The chain is Small ribosomal subunit protein uS19 from Salinispora tropica (strain ATCC BAA-916 / DSM 44818 / JCM 13857 / NBRC 105044 / CNB-440).